A 315-amino-acid polypeptide reads, in one-letter code: Methionyl-tRNA formyltransferase (315 aa).

113–116 contributes to the (6S)-5,6,7,8-tetrahydrofolate binding site; it reads SLLP.

It belongs to the Fmt family.

The enzyme catalyses L-methionyl-tRNA(fMet) + (6R)-10-formyltetrahydrofolate = N-formyl-L-methionyl-tRNA(fMet) + (6S)-5,6,7,8-tetrahydrofolate + H(+). Attaches a formyl group to the free amino group of methionyl-tRNA(fMet). The formyl group appears to play a dual role in the initiator identity of N-formylmethionyl-tRNA by promoting its recognition by IF2 and preventing the misappropriation of this tRNA by the elongation apparatus. In Pseudoalteromonas atlantica (strain T6c / ATCC BAA-1087), this protein is Methionyl-tRNA formyltransferase.